The chain runs to 430 residues: Hemagglutinin-esterase (430 aa).

A signal peptide spans 1–27; sequence MLRMRVRPPSAIPVFLIFVLLPFVLTS. The tract at residues 16–133 is esterase domain first part; it reads LIFVLLPFVL…GSFGWVSNKV (118 aa). Over 28 to 404 the chain is Virion surface; it reads KPITPHYGPG…ENVDVTSSAY (377 aa). Catalysis depends on S49, which acts as the Nucleophile. A disulfide bond links C53 and C69. 7 N-linked (GlcNAc...) asparagine; by host glycosylation sites follow: N88, N117, N159, N165, N247, N268, and N289. 3 disulfides stabilise this stretch: C120-C168, C207-C284, and C215-C257. A receptor binding region spans residues 134-274; that stretch reads GFYSKLYSMA…GVYNATTFGK (141 aa). Residues 275–390 are esterase domain second part; it reads FLIYPTKSYC…SCPQYYKLFE (116 aa). C315 and C320 are oxidised to a cystine. The N-linked (GlcNAc...) asparagine; by host glycan is linked to N324. Catalysis depends on charge relay system residues D336 and H339. A glycan (N-linked (GlcNAc...) asparagine; by host) is linked at N354. C357 and C382 are joined by a disulfide. The chain crosses the membrane as a helical span at residues 405-425; it reads FVATWVLLVLVIILIFILISF. Topologically, residues 426-430 are intravirion; that stretch reads CLSSY.

The protein belongs to the influenza type C/coronaviruses hemagglutinin-esterase family. Post-translationally, N-glycosylated.

Its subcellular location is the virion membrane. It is found in the host cell membrane. The catalysed reaction is N-acetyl-9-O-acetylneuraminate + H2O = N-acetylneuraminate + acetate + H(+). It catalyses the reaction N-acetyl-4-O-acetylneuraminate + H2O = N-acetylneuraminate + acetate + H(+). Functionally, structural protein that makes short spikes at the surface of the virus. Contains receptor binding and receptor-destroying activities. Mediates de-O-acetylation of N-acetyl-9-O-acetylneuraminic acid, which is probably the receptor determinant recognized by the virus on the surface of erythrocytes and susceptible cells. This receptor-destroying activity is important for virus release as it probably helps preventing self-aggregation and ensures the efficient spread of the progeny virus from cell to cell. May serve as a secondary viral attachment protein for initiating infection, the spike protein being the major one. Seems to be a 'luxury' protein that is not absolutely necessary for virus infection in culture. However, its presence in the virus may alter its pathogenicity. May become a target for both the humoral and the cellular branches of the immune system. The sequence is that of Hemagglutinin-esterase (HE) from Porcine torovirus (strain P10) (PoTV).